We begin with the raw amino-acid sequence, 169 residues long: MLATRVFSLVGKRAISTSVCVRAHESVVKSEDFSLPAYMDRRDHPLPEVAHVKHLSASQKALKEKEKASWSSLSMDEKVELYRIKFKESFAEMNRGSNEWKTVVGGAMFFIGFTALVIMWQKHYVYGPLPQSFDKEWVAKQTKRMLDMKVNPIQGLASKWDYEKNEWKK.

Residues 1–22 (MLATRVFSLVGKRAISTSVCVR) constitute a mitochondrion transit peptide. Topologically, residues 23–98 (AHESVVKSED…SFAEMNRGSN (76 aa)) are mitochondrial matrix. At Lys-29 the chain carries N6-acetyllysine; alternate. Lys-29 is modified (N6-succinyllysine; alternate). Lys-53 is modified (N6-acetyllysine). A phosphoserine mark is found at Ser-56 and Ser-58. Lys-60 bears the N6-acetyllysine; alternate mark. Lys-60 is subject to N6-succinyllysine; alternate. At Lys-67 the chain carries N6-acetyllysine. Residues 99-124 (EWKTVVGGAMFFIGFTALVIMWQKHY) traverse the membrane as a helical segment. Topologically, residues 125–169 (VYGPLPQSFDKEWVAKQTKRMLDMKVNPIQGLASKWDYEKNEWKK) are mitochondrial intermembrane.

This sequence belongs to the cytochrome c oxidase IV family. As to quaternary structure, component of the cytochrome c oxidase (complex IV, CIV), a multisubunit enzyme composed of 14 subunits. The complex is composed of a catalytic core of 3 subunits MT-CO1, MT-CO2 and MT-CO3, encoded in the mitochondrial DNA, and 11 supernumerary subunits COX4I1 (or COX4I2), COX5A, COX5B, COX6A1 (or COX6A2), COX6B1 (or COX6B2), COX6C, COX7A2 (or COX7A1), COX7B, COX7C, COX8A and NDUFA4, which are encoded in the nuclear genome. The complex exists as a monomer or a dimer and forms supercomplexes (SCs) in the inner mitochondrial membrane with NADH-ubiquinone oxidoreductase (complex I, CI) and ubiquinol-cytochrome c oxidoreductase (cytochrome b-c1 complex, complex III, CIII), resulting in different assemblies (supercomplex SCI(1)III(2)IV(1) and megacomplex MCI(2)III(2)IV(2)). Interacts with AFG1L. Interacts with PHB2; the interaction decreases in absence of SPHK2. Interacts with ABCB7; this interaction allows the regulation of cellular iron homeostasis and cellular reactive oxygen species (ROS) levels in cardiomyocytes. Interacts with FLVCR2; this interaction occurs in the absence of heme and is disrupted upon heme binding. Interacts with IRGC. As to expression, ubiquitous.

It localises to the mitochondrion inner membrane. Its pathway is energy metabolism; oxidative phosphorylation. Its function is as follows. Component of the cytochrome c oxidase, the last enzyme in the mitochondrial electron transport chain which drives oxidative phosphorylation. The respiratory chain contains 3 multisubunit complexes succinate dehydrogenase (complex II, CII), ubiquinol-cytochrome c oxidoreductase (cytochrome b-c1 complex, complex III, CIII) and cytochrome c oxidase (complex IV, CIV), that cooperate to transfer electrons derived from NADH and succinate to molecular oxygen, creating an electrochemical gradient over the inner membrane that drives transmembrane transport and the ATP synthase. Cytochrome c oxidase is the component of the respiratory chain that catalyzes the reduction of oxygen to water. Electrons originating from reduced cytochrome c in the intermembrane space (IMS) are transferred via the dinuclear copper A center (CU(A)) of subunit 2 and heme A of subunit 1 to the active site in subunit 1, a binuclear center (BNC) formed by heme A3 and copper B (CU(B)). The BNC reduces molecular oxygen to 2 water molecules using 4 electrons from cytochrome c in the IMS and 4 protons from the mitochondrial matrix. The sequence is that of Cytochrome c oxidase subunit 4 isoform 1, mitochondrial from Homo sapiens (Human).